Here is a 71-residue protein sequence, read N- to C-terminus: Exodeoxyribonuclease 7 small subunit (71 aa).

This sequence belongs to the XseB family. In terms of assembly, heterooligomer composed of large and small subunits.

The protein localises to the cytoplasm. It catalyses the reaction Exonucleolytic cleavage in either 5'- to 3'- or 3'- to 5'-direction to yield nucleoside 5'-phosphates.. Functionally, bidirectionally degrades single-stranded DNA into large acid-insoluble oligonucleotides, which are then degraded further into small acid-soluble oligonucleotides. The polypeptide is Exodeoxyribonuclease 7 small subunit (Streptococcus suis (strain 98HAH33)).